The following is a 229-amino-acid chain: Molybdenum transport system permease protein ModB (229 aa).

The Periplasmic segment spans residues Met-1 to Lys-16. One can recognise an ABC transmembrane type-1 domain in the interval Val-11–Leu-219. Residues Val-17–Val-37 traverse the membrane as a helical segment. Topologically, residues Arg-38–Ser-49 are cytoplasmic. Residues Val-50–Met-70 form a helical membrane-spanning segment. At Gly-71–Trp-83 the chain is on the periplasmic side. The chain crosses the membrane as a helical span at residues Phe-84–Phe-104. At Pro-105–Val-136 the chain is on the cytoplasmic side. The chain crosses the membrane as a helical span at residues Phe-137–Phe-157. Residues Ala-158–Leu-201 are Periplasmic-facing. A helical transmembrane segment spans residues Cys-202–Ile-222. Residues Ser-223–Arg-229 lie on the Cytoplasmic side of the membrane.

It belongs to the binding-protein-dependent transport system permease family. CysTW subfamily.

The protein resides in the cell inner membrane. Functionally, part of the binding-protein-dependent transport system for molybdenum; probably responsible for the translocation of the substrate across the membrane. The sequence is that of Molybdenum transport system permease protein ModB (modB) from Escherichia coli O157:H7.